A 202-amino-acid chain; its full sequence is Glycerol-3-phosphate acyltransferase (202 aa).

6 consecutive transmembrane segments (helical) span residues 2–22 (MIIV…GFVI), 54–74 (FLVT…PLWL), 85–105 (FFTN…YPVY), 120–140 (VVLG…FIIL), 141–161 (KIFK…VIGS), and 162–182 (LIIQ…ILII).

This sequence belongs to the PlsY family. As to quaternary structure, probably interacts with PlsX.

It localises to the cell membrane. It carries out the reaction an acyl phosphate + sn-glycerol 3-phosphate = a 1-acyl-sn-glycero-3-phosphate + phosphate. It participates in lipid metabolism; phospholipid metabolism. In terms of biological role, catalyzes the transfer of an acyl group from acyl-phosphate (acyl-PO(4)) to glycerol-3-phosphate (G3P) to form lysophosphatidic acid (LPA). This enzyme utilizes acyl-phosphate as fatty acyl donor, but not acyl-CoA or acyl-ACP. The polypeptide is Glycerol-3-phosphate acyltransferase (Staphylococcus aureus (strain bovine RF122 / ET3-1)).